Reading from the N-terminus, the 463-residue chain is FAD-dependent monooxygenase str9 (463 aa).

FAD-binding residues include glutamate 37, glycine 50, and arginine 114. Arginine 200 is an active-site residue. Position 334 (aspartate 334) interacts with FAD.

This sequence belongs to the paxM FAD-dependent monooxygenase family.

Its pathway is mycotoxin biosynthesis. Functionally, FAD-dependent monooxygenase; part of the gene cluster that mediates the biosynthesis of strobilurin A, an antifungal polyketide that contains a key beta-methoxyacrylate toxophore that targets the complex III of the mitochondrial electron transport chain. Strobilurin biosynthesis begins with construction of benzoyl CoA by step-wise elimination of ammonia from phenylalanine by the phenylalanine ammonia-lyase str11, oxygenation by str8 and retro-Claisen reaction to form benzoic acid, which is activated to its CoA thiolester benzoyl CoA by the dedicated CoA ligase str10. Benzoyl CoA forms the starter unit for the highly reducing polyketide synthase stpks1 that produces the polyketide prestrobilutin A. The FAD-dependent oxygenase str9 then catalyzes the key oxidative rearrangement responsible for the creation of the beta-methoxyacrylate toxophore. Str9 performs epoxidation of the 2,3 olefin of prestrobilutin A, followed by Meinwald rearrangement to furnish the aldehyde intermediate. Rapid enolization of the aldehyde intermediate would give the beta-methoxyacrylate skeleton and methylations catalyzed by str2 and str3 complete the synthesis and lead to the production of strobilurin A. The short-chain dehydrogenase stl2 and the dehydrogenase str4 play a role in the shunt pathway leading to the production of bolineol. The cluster encodes no obvious halogenase gene that could be involved in production of strobilurin B, nor any obvious dimethylallyl-transferase that could be involved in the production of strobilurin G. It is possible that unknown proteins encoded in, or near, the cluster (such as str1 or stl1) may form new classes of halogenases or dimethylally-transferases, or that the responsible genes are located elsewhere on the genome. Similarly, proteins encoded by str5/str6 hydrolases appear to have no chemical role in the biosynthesis of strobilurin A. Finally, no obvious self-resistance gene is found within the cluster. In Strobilurus tenacellus, this protein is FAD-dependent monooxygenase str9.